The following is an 82-amino-acid chain: Small ribosomal subunit protein bS18 (82 aa).

The tract at residues 1–25 is disordered; that stretch reads MADTSSSQARRPFHRRRKTCPFSGA.

The protein belongs to the bacterial ribosomal protein bS18 family. In terms of assembly, part of the 30S ribosomal subunit. Forms a tight heterodimer with protein bS6.

Binds as a heterodimer with protein bS6 to the central domain of the 16S rRNA, where it helps stabilize the platform of the 30S subunit. In Agrobacterium fabrum (strain C58 / ATCC 33970) (Agrobacterium tumefaciens (strain C58)), this protein is Small ribosomal subunit protein bS18.